We begin with the raw amino-acid sequence, 31 residues long: ALWKTMLKKLGTMALHAGKAAFGAAADTISQ.

It belongs to the frog skin active peptide (FSAP) family. Dermaseptin subfamily. In terms of tissue distribution, expressed by the skin glands.

It localises to the secreted. Functionally, antibacterial activity against Gram-positive bacteria S.aureus and E.faecalis, and Gram-negative bacteria P.aeruginosa and E.coli. The protein is Dermaseptin-DI3 of Phyllomedusa distincta (Monkey frog).